The primary structure comprises 291 residues: MQSLSLRAHAKVNMHLWVGARRADGLHSIESVMQRITLADSLSLSRLDIPGRCEVCSPYMALPRENTLTRAYARFCQVTGVHDGVRVRVVKRIPAGSGLGGGSADAAALLCGLDTLFGTTLSARVLREVAYSVGSDVPFFLASQAACVLGGGEQLVPLVPKTGYLGLLVWPGLHSGSAQAYEDLDRLRACGVHAADGEQYSLRGATALSAHYAQDCARWRFFNSLDAPVQRRYPVVALARWDLARAGACFTAMSGSGSXVFGLYRDEEELRRAHKLLAKRWCWCVRVRLCG.

Residue lysine 11 is part of the active site. 94 to 104 (PAGSGLGGGSA) is an ATP binding site. Aspartate 136 is a catalytic residue.

It belongs to the GHMP kinase family. IspE subfamily.

The catalysed reaction is 4-CDP-2-C-methyl-D-erythritol + ATP = 4-CDP-2-C-methyl-D-erythritol 2-phosphate + ADP + H(+). The protein operates within isoprenoid biosynthesis; isopentenyl diphosphate biosynthesis via DXP pathway; isopentenyl diphosphate from 1-deoxy-D-xylulose 5-phosphate: step 3/6. Catalyzes the phosphorylation of the position 2 hydroxy group of 4-diphosphocytidyl-2C-methyl-D-erythritol. This is 4-diphosphocytidyl-2-C-methyl-D-erythritol kinase from Treponema pallidum (strain Nichols).